Here is a 68-residue protein sequence, read N- to C-terminus: Large ribosomal subunit protein bL33c (68 aa).

Belongs to the bacterial ribosomal protein bL33 family.

It is found in the plastid. The protein resides in the chloroplast. The chain is Large ribosomal subunit protein bL33c from Pinus koraiensis (Korean pine).